A 374-amino-acid chain; its full sequence is Transcription factor NF-E2 45 kDa subunit (374 aa).

Disordered stretches follow at residues 1–21 (MSPC…IPEP) and 40–61 (LNAP…GPPP). The interval 1 to 83 (MSPCPPQQSR…PGFPLPAPPY (83 aa)) is required for interaction with MAPK8. The segment at 1–207 (MSPCPPQQSR…PPAETPLALE (207 aa)) is transactivation domain. Over residues 48-61 (FEPPAPVPYPGPPP) the composition is skewed to pro residues. 2 consecutive short sequence motifs (PXY motif) follow at residues 61-65 (PPPSY) and 79-83 (PAPPY). Positions 132–165 (LSAGPSKPQEDPESDSGLSLNYSDAESLELEGTE) are disordered. Residue S158 is modified to Phosphoserine; by MAPK8. A Phosphoserine; by PKA modification is found at S171. The disordered stretch occupies residues 207–227 (EPSSGPVRAKPTARGEAGSRD). A bZIP domain is found at 267–330 (LVRDIRRRGK…EVMRQQLTDL (64 aa)). The tract at residues 269–288 (RDIRRRGKNKVAAQNCRKRK) is basic motif. Residues 292–299 (IVQLEREL) form a leucine-zipper region. Residue K369 forms a Glycyl lysine isopeptide (Lys-Gly) (interchain with G-Cter in SUMO); alternate linkage. K369 participates in a covalent cross-link: Glycyl lysine isopeptide (Lys-Gly) (interchain with G-Cter in SUMO1); alternate.

Belongs to the bZIP family. CNC subfamily. Homodimer; can bind DNA as a homodimer. Erythroid transcription activator nuclear factor erythroid-derived 2 (NF-E2), composed of a heterodimer of NFE2 and MAFK, possesses transactivation activity on beta-globin. Also forms high affinity heterodimer with MAFG; the interaction promotes erythropoiesis. Interacts (via the PXY motif 1) with ITCH (via the WW 1 domain); the interaction promotes 'Lys63'-linked ubiquitination of NFE2, translocates it to the cytoplasm and inhibits its transactivation activity. Interacts with KMT2D/MLL2; the interaction promotes transactivation of the beta-globin locus. Interacts with MAPK8 (phosphorylated form); the interaction leads to phosphorylation of NFE2 in undifferentiated cells. In terms of processing, phosphorylated on serine residues. In undifferentiated erythrocytes, phosphorylated by MAPK8 which then leads to ubiquitination and protein degradation. Post-translationally, sumoylated. Sumoylation is required for translocation to nuclear bodies PODs, anchoring to the gene loci, and transactivation of the beta-globin gene. Ubiquitinated mainly by 'Lys63'-linked ubiquitin. Polyubiquitination with 'Lys63'-linked ubiquitin by ITCH retains NFE2 in the cytoplasm preventing its transactivation activity. In undifferentiated erythrocyte, is ubiquitinated after MAPK8-mediatd phosphorylation leading to protein degradation.

The protein resides in the nucleus. It is found in the cytoplasm. Its function is as follows. Component of the NF-E2 complex essential for regulating erythroid and megakaryocytic maturation and differentiation. Binds to the hypersensitive site 2 (HS2) of the beta-globin control region (LCR). This subunit (NFE2) recognizes the TCAT/C sequence of the AP-1-like core palindrome present in a number of erythroid and megakaryocytic gene promoters. Requires MAFK or other small MAF proteins for binding to the NF-E2 motif. May play a role in all aspects of hemoglobin production from globin and heme synthesis to procurement of iron. This is Transcription factor NF-E2 45 kDa subunit (NFE2) from Bos taurus (Bovine).